A 299-amino-acid chain; its full sequence is Ribosomal protein uL3 glutamine methyltransferase (299 aa).

Belongs to the protein N5-glutamine methyltransferase family. PrmB subfamily.

It carries out the reaction L-glutaminyl-[ribosomal protein uL3] + S-adenosyl-L-methionine = N(5)-methyl-L-glutaminyl-[ribosomal protein uL3] + S-adenosyl-L-homocysteine + H(+). Methylates large ribosomal subunit protein uL3 on a specific glutamine residue. This chain is Ribosomal protein uL3 glutamine methyltransferase, found in Neisseria gonorrhoeae (strain ATCC 700825 / FA 1090).